The sequence spans 86 residues: Small ribosomal subunit protein uS15c (86 aa).

This sequence belongs to the universal ribosomal protein uS15 family. Part of the 30S ribosomal subunit.

Its subcellular location is the plastid. The protein is Small ribosomal subunit protein uS15c (rps15) of Cuscuta gronovii (Common dodder).